Consider the following 606-residue polypeptide: MNLFTSTLILSLSMLTIPVLMSLSSIYKSTQYPYYVKTIISYAFFTSLIPTLIFINSGHEAILSNWHWMTIQTVKLSLNFKLDYFSMIFTPVALFVTWSIMEFSMWYMHSDPNMNRFFKYLLMFLITMMILVTANNLFQLFIGWEGVGIMSFLLIGWWYGRADANTAALQAILYNRIGDIGFILAMAWFLFNSNSWELQQIFMLDTNQNLLPLLGLLLAATGKSAQFGLHPWLPSAMEGPTPVSALLHSSTMVVAGIFLLIRFYPLIETNKTMQTLILCMGAITTLFTAICALTQNDIKKIIAFSTSSQLGLMMVTIGINQPHLAFLHICTHAFFKAMLFMCSGSIIHNLNDEQDIRKMGGLYNALPFTTTSLIVGSLALTGTPFLTGFYSKDLIIETANTSYTNAWALLMTLIATSLTAVYSTRILYYSVLGQPRHSTLILINENNPLLINSIKRLLIGSIFAGFIISLNITPMTIPQMTMPTHLKLTALIITLTGFILALEISLMTQNLKLSYPHNYHKFSNMLGYFPIIMHRLIPSTTLMMSQKFSSMLLDLTWMENILPKSISNFQASSSIMVSNQKGLIKLYFLSFLITLIITMLLFNFHA.

A run of 16 helical transmembrane segments spans residues 3–23 (LFTSTLILSLSMLTIPVLMSL), 35–55 (YVKTIISYAFFTSLIPTLIFI), 87–107 (MIFTPVALFVTWSIMEFSMWY), 117–137 (FFKYLLMFLITMMILVTANNL), 140–160 (LFIGWEGVGIMSFLLIGWWYG), 171–191 (AILYNRIGDIGFILAMAWFLF), 211–233 (LPLLGLLLAATGKSAQFGLHPWL), 241–261 (TPVSALLHSSTMVVAGIFLLI), 273–293 (MQTLILCMGAITTLFTAICAL), 301–320 (IIAFSTSSQLGLMMVTIGIN), 325–347 (AFLHICTHAFFKAMLFMCSGSII), 366–386 (LPFTTTSLIVGSLALTGTPFL), 402–422 (SYTNAWALLMTLIATSLTAVY), 457–477 (LLIGSIFAGFIISLNITPMTI), 488–508 (LTALIITLTGFILALEISLMT), and 582–602 (GLIKLYFLSFLITLIITMLLF).

The protein belongs to the complex I subunit 5 family. As to quaternary structure, core subunit of respiratory chain NADH dehydrogenase (Complex I) which is composed of 45 different subunits.

Its subcellular location is the mitochondrion inner membrane. The enzyme catalyses a ubiquinone + NADH + 5 H(+)(in) = a ubiquinol + NAD(+) + 4 H(+)(out). Its function is as follows. Core subunit of the mitochondrial membrane respiratory chain NADH dehydrogenase (Complex I) which catalyzes electron transfer from NADH through the respiratory chain, using ubiquinone as an electron acceptor. Essential for the catalytic activity and assembly of complex I. This chain is NADH-ubiquinone oxidoreductase chain 5 (MT-ND5), found in Pseudosoriculus fumidus (Taiwanese brown-toothed shrew).